The following is a 272-amino-acid chain: MMACHC-like protein (272 aa).

Substrate-binding positions include Asp121, 132–135 (ILMQ), and 146–148 (YYQ).

Belongs to the MMACHC family. FAD is required as a cofactor. FMN serves as cofactor.

It localises to the cytoplasm. Its function is as follows. Catalyzes the reductive dealkylation of cyanocobalamin to cob(II)alamin, using FAD or FMN as cofactor and NADPH as cosubstrate. Can also catalyze the glutathione-dependent reductive demethylation of methylcobalamin, and, with much lower efficiency, the glutathione-dependent reductive demethylation of adenosylcobalamin. Under anaerobic conditions cob(I)alamin is the first product; it is highly reactive and is converted to aquocob(II)alamin in the presence of oxygen. Binds cyanocobalamin, adenosylcobalamin, methylcobalamin and other, related vitamin B12 derivatives. In Caenorhabditis elegans, this protein is MMACHC-like protein (cblc-1).